An 82-amino-acid chain; its full sequence is Toxin NaTx-13 (82 aa).

In terms of domain architecture, LCN-type CS-alpha/beta spans 6-70 (PGGYPVNQFK…KNSIEVFSCG (65 aa)). 4 cysteine pairs are disulfide-bonded: cysteine 16/cysteine 69, cysteine 20/cysteine 44, cysteine 30/cysteine 49, and cysteine 34/cysteine 51.

It belongs to the long (4 C-C) scorpion toxin superfamily. Sodium channel inhibitor family. In terms of tissue distribution, expressed by the venom gland.

It is found in the secreted. In terms of biological role, probable sodium channel inhibitor. The protein is Toxin NaTx-13 of Centruroides sculpturatus (Arizona bark scorpion).